Here is a 185-residue protein sequence, read N- to C-terminus: Ribosome-recycling factor (185 aa).

This sequence belongs to the RRF family.

It is found in the cytoplasm. Its function is as follows. Responsible for the release of ribosomes from messenger RNA at the termination of protein biosynthesis. May increase the efficiency of translation by recycling ribosomes from one round of translation to another. This Thermus thermophilus (strain ATCC BAA-163 / DSM 7039 / HB27) protein is Ribosome-recycling factor.